Consider the following 178-residue polypeptide: Bifunctional protein PyrR (178 aa).

The PRPP-binding signature appears at Val-99–Thr-111.

This sequence belongs to the purine/pyrimidine phosphoribosyltransferase family. PyrR subfamily. Homodimer and homohexamer; in equilibrium.

The catalysed reaction is UMP + diphosphate = 5-phospho-alpha-D-ribose 1-diphosphate + uracil. In terms of biological role, regulates transcriptional attenuation of the pyrimidine nucleotide (pyr) operon by binding in a uridine-dependent manner to specific sites on pyr mRNA. This disrupts an antiterminator hairpin in the RNA and favors formation of a downstream transcription terminator, leading to a reduced expression of downstream genes. Its function is as follows. Also displays a weak uracil phosphoribosyltransferase activity which is not physiologically significant. The protein is Bifunctional protein PyrR of Thermoanaerobacter pseudethanolicus (strain ATCC 33223 / 39E) (Clostridium thermohydrosulfuricum).